We begin with the raw amino-acid sequence, 66 residues long: Large ribosomal subunit protein uL29 (66 aa).

It belongs to the universal ribosomal protein uL29 family.

This chain is Large ribosomal subunit protein uL29, found in Agrobacterium fabrum (strain C58 / ATCC 33970) (Agrobacterium tumefaciens (strain C58)).